A 202-amino-acid polypeptide reads, in one-letter code: Small ribosomal subunit protein uS4c (202 aa).

Positions 90 to 152 (MRLDNLIFRL…AASKSLVNTY (63 aa)) constitute an S4 RNA-binding domain.

It belongs to the universal ribosomal protein uS4 family. Part of the 30S ribosomal subunit. Contacts protein S5. The interaction surface between S4 and S5 is involved in control of translational fidelity.

The protein resides in the plastid. It is found in the chloroplast. Its function is as follows. One of the primary rRNA binding proteins, it binds directly to 16S rRNA where it nucleates assembly of the body of the 30S subunit. Functionally, with S5 and S12 plays an important role in translational accuracy. The polypeptide is Small ribosomal subunit protein uS4c (rps4) (Emiliania huxleyi (Coccolithophore)).